The following is a 303-amino-acid chain: Glucosyl-3-phosphoglycerate synthase (303 aa).

Residues 35-39 (PALNE), serine 66, lysine 99, and 119-120 (DS) each bind UDP-alpha-D-glucose. Aspartate 121 lines the Mn(2+) pocket. 166–169 (GRVT) is a binding site for (2R)-3-phosphoglycerate. UDP-alpha-D-glucose contacts are provided by residues 211-214 (YGVE) and 238-243 (RAHRNR). Histidine 240 is a Mn(2+) binding site. Asparagine 242 contributes to the (2R)-3-phosphoglycerate binding site.

It belongs to the glycosyltransferase 2 family. In terms of assembly, homotrimer. Requires Mg(2+) as cofactor. Mn(2+) is required as a cofactor.

It carries out the reaction an NDP-alpha-D-glucose + (2R)-3-phosphoglycerate = (2R)-2-O-(alpha-D-glucopyranosyl)-3-phospho-glycerate + a ribonucleoside 5'-diphosphate + H(+). The catalysed reaction is (2R)-3-phosphoglycerate + UDP-alpha-D-glucose = (2R)-2-O-(alpha-D-glucopyranosyl)-3-phospho-glycerate + UDP + H(+). The enzyme catalyses ADP-alpha-D-glucose + (2R)-3-phosphoglycerate = (2R)-2-O-(alpha-D-glucopyranosyl)-3-phospho-glycerate + ADP + H(+). It catalyses the reaction GDP-D-glucose + (2R)-3-phosphoglycerate = (2R)-2-O-(alpha-D-glucopyranosyl)-3-phospho-glycerate + GDP + H(+). Its function is as follows. Involved in the biosynthesis of 6-O-methylglucose lipopolysaccarides (MGLPs). Catalyzes the transfer of the glucose moiety from a nuleotide sugar such as UDP-alpha-D-glucose to the position 2 of 3-phospho-D-glycerate (3-PGA) to form glucosyl-3-phosphoglycerate (GPG). It can use UDP-glucose, ADP-glucose and GDP-glucose as sugar donor substrates with decreasing affinity and with 3-PGA as an acceptor. D-glycerate can only be an acceptor with ADP-glucose and at a very low rate. This chain is Glucosyl-3-phosphoglycerate synthase (gpgS), found in Mycolicibacterium smegmatis (strain ATCC 700084 / mc(2)155) (Mycobacterium smegmatis).